The following is a 94-amino-acid chain: Beta-diguetoxin-Dc1a (94 aa).

Positions 1 to 17 (MKVFVVLLCLSLAAVYA) are cleaved as a signal peptide. The propeptide occupies 18-38 (LEERLDKDADIMLDSPADMER). 4 disulfide bridges follow: Cys-50–Cys-63, Cys-57–Cys-77, Cys-62–Cys-91, and Cys-79–Cys-89.

It belongs to the neurotoxin 26 (DTX) family. Expressed by the venom gland.

The protein localises to the secreted. Functionally, insecticidal toxin. This toxin promotes opening of insect Nav channels. The toxin binds to the S1-S2 and S3-S4 loops in the domain II voltage-sensor of insect Nav channels (i.e., receptor site 4). The American cockroach P.americana is largely resistant to the effects of this toxin due to an unusual sequence within the domain II S1-S2 loop. In vivo, paralyzes lepidopteran and dipteran larvae. Paralyzed insects ultimately die from secondary effects of starvation and dehydration. This Diguetia canities (Desert bush spider) protein is Beta-diguetoxin-Dc1a.